The chain runs to 142 residues: Large ribosomal subunit protein uL11 (142 aa).

The protein belongs to the universal ribosomal protein uL11 family. In terms of assembly, part of the ribosomal stalk of the 50S ribosomal subunit. Interacts with L10 and the large rRNA to form the base of the stalk. L10 forms an elongated spine to which L12 dimers bind in a sequential fashion forming a multimeric L10(L12)X complex. One or more lysine residues are methylated.

In terms of biological role, forms part of the ribosomal stalk which helps the ribosome interact with GTP-bound translation factors. The sequence is that of Large ribosomal subunit protein uL11 from Shewanella frigidimarina (strain NCIMB 400).